The primary structure comprises 1528 residues: Rho GTPase-activating protein 7 (1528 aa).

Disordered regions lie at residues 72–94 (DFPG…HEGE), 288–310 (MSAE…PPKV), and 372–436 (ALST…TKPK). Over residues 81–94 (LSKDVDENDSHEGE) the composition is skewed to basic and acidic residues. The segment covering 374-384 (STSSSPSGTPT) has biased composition (low complexity). The segment covering 396 to 436 (GSESGADTISVNQTRVNLSSDTESTDLPSSTPVANSGTKPK) has biased composition (polar residues). Residues 448–515 (KAEIEAKEAC…LNKCAVMKLE (68 aa)) form the SAM domain. Phosphoserine is present on residues Ser-523, Ser-526, and Ser-566. 4 disordered regions span residues 558 to 617 (PKQD…ATPR), 732 to 764 (RSVS…RTRS), 829 to 876 (PSGN…SSRL), and 928 to 990 (SDEG…GVGA). Low complexity-rich tracts occupy residues 591-605 (VSSV…SLPS) and 734-760 (VSNS…SPVT). The interval 710–884 (QLNCVEISAL…RLSIYDNVPG (175 aa)) is focal adhesion-targeting (FAT). Ser-757 is subject to Phosphoserine. Basic and acidic residues predominate over residues 851–862 (LRRENSSDSPKE). Polar residues predominate over residues 936–948 (ALDSVSPCPSSPK). Basic and acidic residues predominate over residues 950 to 960 (IHLDVDNDRTT). Over residues 961–972 (PSDLDSTGNSLN) the composition is skewed to polar residues. Residues 1051 to 1073 (KHGFSWAVPKFMKRIKVPDYKDR) are polybasic cluster (PBR). One can recognise a Rho-GAP domain in the interval 1078–1284 (VPLTVNVQRT…HMIAECKKLF (207 aa)). Residues 1314 to 1521 (GNDDSADYQH…RDSFSNQNTE (208 aa)) enclose the START domain.

Interacts with EF1A1, facilitates EF1A1 distribution to the membrane periphery and ruffles upon growth factor stimulation and suppresses cell migration. Interacts with tensin TNS1 (via N-terminus); the interaction is decreased by phosphorylation of TNS1. Interacts with TNS3 and PTEN; in resting cells, interacts with TNS3 (via C2 tensin-type domain) but, following growth factor stimulation, TNS3 and PTEN are phosphorylated which leads to weakened interaction with TNS3 and enhanced interaction with PTEN. Interacts (via C-terminus) with tensin TNS4 (via SH2 domain); the interaction is independent of tyrosine phosphorylation of DLC1. In terms of tissue distribution, highest level of expression in the spleen, with rather lower levels in prostate, testis, ovary, small intestine and colon, but none in the thymus.

It is found in the cytoplasm. The protein resides in the cell junction. Its subcellular location is the focal adhesion. It localises to the membrane. In terms of biological role, functions as a GTPase-activating protein for the small GTPases RHOA, RHOB, RHOC and CDC42, terminating their downstream signaling. This induces morphological changes and detachment through cytoskeletal reorganization, playing a critical role in biological processes such as cell migration and proliferation. Also functions in vivo as an activator of the phospholipase PLCD1. Active DLC1 increases cell migration velocity but reduces directionality. Required for growth factor-induced epithelial cell migration; in resting cells, interacts with TNS3 while PTEN interacts with the p85 regulatory subunit of the PI3K kinase complex but growth factor stimulation induces phosphorylation of TNS3 and PTEN, causing them to change their binding preference so that PTEN interacts with DLC1 and TNS3 interacts with p85. The PTEN-DLC1 complex translocates to the posterior of migrating cells to activate RHOA while the TNS3-p85 complex translocates to the leading edge of migrating cells to promote RAC1 activation. This is Rho GTPase-activating protein 7 (DLC1) from Homo sapiens (Human).